A 316-amino-acid polypeptide reads, in one-letter code: WSCD family member GA21586 (316 aa).

A helical membrane pass occupies residues 8-28 (FFGVSATIIIYIGGVLFLSMN). Residues Asn-78, Asn-150, Asn-226, and Asn-232 are each glycosylated (N-linked (GlcNAc...) asparagine).

It belongs to the WSCD family.

It localises to the membrane. The chain is WSCD family member GA21586 from Drosophila pseudoobscura pseudoobscura (Fruit fly).